Here is a 216-residue protein sequence, read N- to C-terminus: Vacuolar iron transporter homolog 4 (216 aa).

The tract at residues 1 to 29 (MAATNGDAELTVAEEAKEEEEATDDGGGG) is disordered. Residues 1–36 (MAATNGDAELTVAEEAKEEEEATDDGGGGVSSQWLR) are Cytoplasmic-facing. A helical transmembrane segment spans residues 37–57 (AAVLGASDGLVSTAALMLGIG). Residues 58–65 (AARPADAR) lie on the Vacuolar side of the membrane. The helical transmembrane segment at 66–86 (AVLLSGLAGLVAGACSMAIGE) threads the bilayer. At 87-134 (YVSVHVQLDVELADLERRRRRGGPAPAGLGLHAAAAAVSRPGQAAAAS) the chain is on the cytoplasmic side. The chain crosses the membrane as a helical span at residues 135-155 (ALSFAAGAALPLLAAWFVAGA). Residues 156-157 (YR) lie on the Vacuolar side of the membrane. The helical transmembrane segment at 158–178 (VRVVVVVATASLALAAFGAAG) threads the bilayer. Over 179 to 190 (ARLGRAPGGRAG) the chain is Cytoplasmic. The chain crosses the membrane as a helical span at residues 191–211 (LRVVVGGLLAMAATYGVMKLF). Residues 212-216 (RTHGV) lie on the Vacuolar side of the membrane.

The protein belongs to the CCC1 family.

It is found in the vacuole membrane. The catalysed reaction is Fe(2+)(in) = Fe(2+)(out). Functionally, probable vacuolar iron transporter that may be involved in the regulation of iron distribution throughout the plant. This Oryza sativa subsp. japonica (Rice) protein is Vacuolar iron transporter homolog 4.